Consider the following 492-residue polypeptide: Glycerol kinase (492 aa).

Thr-11 is a binding site for ADP. 2 residues coordinate ATP: Thr-11 and Thr-12. Position 11 (Thr-11) interacts with sn-glycerol 3-phosphate. An ADP-binding site is contributed by Lys-15. Arg-79, Glu-80, Tyr-129, and Asp-238 together coordinate sn-glycerol 3-phosphate. Residues Arg-79, Glu-80, Tyr-129, Asp-238, and Gln-239 each contribute to the glycerol site. 4 residues coordinate ADP: Thr-260, Gly-302, Gly-403, and Asn-407. ATP contacts are provided by Thr-260, Gly-302, and Gly-403.

This sequence belongs to the FGGY kinase family.

It carries out the reaction glycerol + ATP = sn-glycerol 3-phosphate + ADP + H(+). The protein operates within polyol metabolism; glycerol degradation via glycerol kinase pathway; sn-glycerol 3-phosphate from glycerol: step 1/1. With respect to regulation, inhibited by fructose 1,6-bisphosphate (FBP). Its function is as follows. Key enzyme in the regulation of glycerol uptake and metabolism. Catalyzes the phosphorylation of glycerol to yield sn-glycerol 3-phosphate. The sequence is that of Glycerol kinase from Aquifex aeolicus (strain VF5).